Consider the following 322-residue polypeptide: tRNA-dihydrouridine synthase B (322 aa).

Residues 16-18 (PMA) and glutamine 70 each bind FMN. The active-site Proton donor is the cysteine 100. Residues lysine 139, 200 to 202 (NGD), and 224 to 225 (GR) contribute to the FMN site.

The protein belongs to the Dus family. DusB subfamily. The cofactor is FMN.

The enzyme catalyses a 5,6-dihydrouridine in tRNA + NAD(+) = a uridine in tRNA + NADH + H(+). The catalysed reaction is a 5,6-dihydrouridine in tRNA + NADP(+) = a uridine in tRNA + NADPH + H(+). In terms of biological role, catalyzes the synthesis of 5,6-dihydrouridine (D), a modified base found in the D-loop of most tRNAs, via the reduction of the C5-C6 double bond in target uridines. The sequence is that of tRNA-dihydrouridine synthase B from Vibrio parahaemolyticus serotype O3:K6 (strain RIMD 2210633).